Here is a 183-residue protein sequence, read N- to C-terminus: Adenine phosphoribosyltransferase (183 aa).

It belongs to the purine/pyrimidine phosphoribosyltransferase family. As to quaternary structure, homodimer.

Its subcellular location is the cytoplasm. The catalysed reaction is AMP + diphosphate = 5-phospho-alpha-D-ribose 1-diphosphate + adenine. It participates in purine metabolism; AMP biosynthesis via salvage pathway; AMP from adenine: step 1/1. In terms of biological role, catalyzes a salvage reaction resulting in the formation of AMP, that is energically less costly than de novo synthesis. The chain is Adenine phosphoribosyltransferase from Salmonella gallinarum (strain 287/91 / NCTC 13346).